The following is a 284-amino-acid chain: Avenin-like b11 (284 aa).

An N-terminal signal peptide occupies residues 1–18; sequence MKVFILALLALTATTAIA.

Belongs to the prolamin family. Contains disulfide bonds.

Its function is as follows. Seed storage protein. Might be integrated via inter-chain disulfide bonds within the glutenin polymer. This chain is Avenin-like b11, found in Triticum aestivum (Wheat).